The chain runs to 315 residues: Small ribosomal subunit biogenesis GTPase RsgA (315 aa).

The region spanning 79-243 (LSKESHILGA…LIDTPGIKGF (165 aa)) is the CP-type G domain. GTP is bound by residues 128–131 (NKID) and 182–190 (GHSGVGKSS). Residues Cys-267, Cys-272, His-274, and Cys-280 each coordinate Zn(2+).

The protein belongs to the TRAFAC class YlqF/YawG GTPase family. RsgA subfamily. In terms of assembly, monomer. Associates with 30S ribosomal subunit, binds 16S rRNA. Zn(2+) serves as cofactor.

It localises to the cytoplasm. Functionally, one of several proteins that assist in the late maturation steps of the functional core of the 30S ribosomal subunit. Helps release RbfA from mature subunits. May play a role in the assembly of ribosomal proteins into the subunit. Circularly permuted GTPase that catalyzes slow GTP hydrolysis, GTPase activity is stimulated by the 30S ribosomal subunit. The polypeptide is Small ribosomal subunit biogenesis GTPase RsgA (Porphyromonas gingivalis (strain ATCC BAA-308 / W83)).